A 186-amino-acid chain; its full sequence is Alkyl hydroperoxide reductase AhpD (186 aa).

Cysteine 132 functions as the Proton donor in the catalytic mechanism. The cysteines at positions 132 and 135 are disulfide-linked. The active-site Cysteine sulfenic acid (-SOH) intermediate is the cysteine 135.

This sequence belongs to the AhpD family.

It carries out the reaction N(6)-[(R)-dihydrolipoyl]-L-lysyl-[lipoyl-carrier protein] + a hydroperoxide = N(6)-[(R)-lipoyl]-L-lysyl-[lipoyl-carrier protein] + an alcohol + H2O. Antioxidant protein with alkyl hydroperoxidase activity. Required for the reduction of the AhpC active site cysteine residues and for the regeneration of the AhpC enzyme activity. The protein is Alkyl hydroperoxide reductase AhpD of Anaeromyxobacter sp. (strain K).